We begin with the raw amino-acid sequence, 219 residues long: Envelope protein US9 homolog (219 aa).

The Intravirion portion of the chain corresponds to 1-193; sequence MEKAEAAAVV…RHRRRRVALT (193 aa). A Di-leucine internalization motif motif is present at residues 145–146; it reads LL. The acidic stretch occupies residues 153 to 168; the sequence is DYDSESGCYYSESDNE. A phosphoserine; by host CK2 mark is found at S163 and S165. Residues 194-214 traverse the membrane as a helical; Signal-anchor for type II membrane protein segment; it reads VAGVILVVVLCAISGIVGAFL. Over 215 to 219 the chain is Virion surface; that stretch reads ARVFP.

It belongs to the alphaherpesvirinae envelope protein US9 family. In terms of processing, phosphorylated on serines within the acidic cluster. Phosphorylation determines whether endocytosed viral US9 traffics to the trans-Golgi network or recycles to the cell membrane.

The protein resides in the virion membrane. It is found in the host Golgi apparatus membrane. It localises to the host smooth endoplasmic reticulum membrane. Its subcellular location is the host cell membrane. Essential for the anterograde spread of the infection throughout the host nervous system. Together with the gE/gI heterodimer, US9 is involved in the sorting and transport of viral structural components toward axon tips. The chain is Envelope protein US9 homolog from Equine herpesvirus 1 (strain Ab4p) (EHV-1).